Here is a 365-residue protein sequence, read N- to C-terminus: Peptide chain release factor 2 (365 aa).

At Q252 the chain carries N5-methylglutamine.

The protein belongs to the prokaryotic/mitochondrial release factor family. In terms of processing, methylated by PrmC. Methylation increases the termination efficiency of RF2.

The protein resides in the cytoplasm. Its function is as follows. Peptide chain release factor 2 directs the termination of translation in response to the peptide chain termination codons UGA and UAA. The protein is Peptide chain release factor 2 of Pectobacterium atrosepticum (strain SCRI 1043 / ATCC BAA-672) (Erwinia carotovora subsp. atroseptica).